The primary structure comprises 276 residues: Molybdenum storage protein subunit alpha (276 aa).

In terms of assembly, octamer consisting of 4 alpha and 4 beta chains.

Its subcellular location is the cytoplasm. Functionally, intracellular storage of molybdenum. Binds polyoxomolybdates. Can bind at least 90 molybdenum atoms per protein molecule. The sequence is that of Molybdenum storage protein subunit alpha from Azotobacter vinelandii (strain DJ / ATCC BAA-1303).